Reading from the N-terminus, the 349-residue chain is Dihydroorotase (349 aa).

Residues H17 and H19 each coordinate Zn(2+). Residues 19–21 (HLR) and N45 contribute to the substrate site. The Zn(2+) site is built by K103, H140, and H178. Position 103 is an N6-carboxylysine (K103). A substrate-binding site is contributed by H140. A substrate-binding site is contributed by L224. A Zn(2+)-binding site is contributed by D252. Residue D252 is part of the active site. The substrate site is built by H256 and A268.

This sequence belongs to the metallo-dependent hydrolases superfamily. DHOase family. Class II DHOase subfamily. In terms of assembly, homodimer. It depends on Zn(2+) as a cofactor.

It carries out the reaction (S)-dihydroorotate + H2O = N-carbamoyl-L-aspartate + H(+). It participates in pyrimidine metabolism; UMP biosynthesis via de novo pathway; (S)-dihydroorotate from bicarbonate: step 3/3. Its function is as follows. Catalyzes the reversible cyclization of carbamoyl aspartate to dihydroorotate. This Buchnera aphidicola subsp. Schizaphis graminum (strain Sg) protein is Dihydroorotase.